The sequence spans 540 residues: CTP synthase (540 aa).

Positions Met-1–Leu-267 are amidoligase domain. Ser-15 serves as a coordination point for CTP. Ser-15 is a UTP binding site. Position 16–21 (Ser-16–Ile-21) interacts with ATP. L-glutamine is bound at residue Tyr-56. An ATP-binding site is contributed by Asp-73. Mg(2+)-binding residues include Asp-73 and Glu-141. CTP-binding positions include Asp-148–Glu-150, Lys-188–Gln-193, and Lys-224. UTP is bound by residues Lys-188–Gln-193 and Lys-224. Residue Arg-240 to Ala-242 coordinates ATP. Residues Thr-292–Lys-540 form the Glutamine amidotransferase type-1 domain. Gly-360 lines the L-glutamine pocket. Catalysis depends on Cys-387, which acts as the Nucleophile; for glutamine hydrolysis. L-glutamine contacts are provided by residues Met-388–Gln-391, Glu-411, and Arg-468. Residues His-513 and Glu-515 contribute to the active site.

It belongs to the CTP synthase family. Homotetramer.

It catalyses the reaction UTP + L-glutamine + ATP + H2O = CTP + L-glutamate + ADP + phosphate + 2 H(+). The catalysed reaction is L-glutamine + H2O = L-glutamate + NH4(+). The enzyme catalyses UTP + NH4(+) + ATP = CTP + ADP + phosphate + 2 H(+). The protein operates within pyrimidine metabolism; CTP biosynthesis via de novo pathway; CTP from UDP: step 2/2. With respect to regulation, allosterically activated by GTP, when glutamine is the substrate; GTP has no effect on the reaction when ammonia is the substrate. The allosteric effector GTP functions by stabilizing the protein conformation that binds the tetrahedral intermediate(s) formed during glutamine hydrolysis. Inhibited by the product CTP, via allosteric rather than competitive inhibition. Its function is as follows. Catalyzes the ATP-dependent amination of UTP to CTP with either L-glutamine or ammonia as the source of nitrogen. Regulates intracellular CTP levels through interactions with the four ribonucleotide triphosphates. The protein is CTP synthase of Methanocaldococcus jannaschii (strain ATCC 43067 / DSM 2661 / JAL-1 / JCM 10045 / NBRC 100440) (Methanococcus jannaschii).